The chain runs to 290 residues: Microtubule-associated protein P320 (290 aa).

8 repeats span residues 1-38 (SEYRQKRTVGEEVTTDMRHVDESHFLTTTHEAYKPIDP), 39-76 (SEYRQKRTVGEEVTTDMRHVDESHFLTTTHEAYKPIDP), 77-114 (SEYRQKRTVGEEVTTDMRHVDESHFLTTTHEAYKPIDP), 115-152 (SEYRQKRTVGEEVTTDMRHVDESHFLTTTHEAYKPIDP), 153-190 (SEYRQKRTVGEEVTTNMRHVDESHFLTTTHEAYKPIDP), 191-228 (SEYRQKRTVGEEVTTDMRHVDESHFLTTTHEAYKPIDP), 229-266 (SEYRQKRTVGEEVTTDMRHVDESHFLTTTHEAYKPIDP), and 267-290 (SEYRQKRTVGEEVTTDMRHVDESH). A disordered region spans residues 251 to 290 (SHFLTTTHEAYKPIDPSEYRQKRTVGEEVTTDMRHVDESH). Positions 259–290 (EAYKPIDPSEYRQKRTVGEEVTTDMRHVDESH) are enriched in basic and acidic residues.

It localises to the cytoplasm. The protein resides in the cytoskeleton. The protein is Microtubule-associated protein P320 of Trypanosoma brucei brucei.